The chain runs to 491 residues: Cytochrome P450 2C40 (491 aa).

The N-terminal stretch at 1 to 25 is a signal peptide; that stretch reads MDPFVVLVLCLSFLLVLSLWRQRSA. Cysteine 435 is a heme binding site.

The protein belongs to the cytochrome P450 family. Requires heme as cofactor. Liver, brain, kidney, and intestine, with trace amounts in lung and heart. Expressed throughout the intestinal tract, with higher expression levels in jejunum, cecum and colon.

It localises to the endoplasmic reticulum membrane. Its subcellular location is the microsome membrane. It carries out the reaction (5Z,8Z,11Z,14Z)-eicosatetraenoate + reduced [NADPH--hemoprotein reductase] + O2 = 16(R)-hydroxy-(5Z,8Z,11Z,14Z)-eicosatetraenoate + oxidized [NADPH--hemoprotein reductase] + H2O + H(+). It catalyses the reaction (5Z,8Z,11Z,14Z)-eicosatetraenoate + reduced [NADPH--hemoprotein reductase] + O2 = 16(S)-hydroxy-(5Z,8Z,11Z,14Z)-eicosatetraenoate + oxidized [NADPH--hemoprotein reductase] + H2O + H(+). The catalysed reaction is (5Z,8Z,11Z,14Z)-eicosatetraenoate + reduced [NADPH--hemoprotein reductase] + O2 = (14R,15S)-epoxy-(5Z,8Z,11Z)-eicosatrienoate + oxidized [NADPH--hemoprotein reductase] + H2O + H(+). The enzyme catalyses (5Z,8Z,11Z,14Z)-eicosatetraenoate + reduced [NADPH--hemoprotein reductase] + O2 = (14S,15R)-epoxy-(5Z,8Z,11Z)-eicosatrienoate + oxidized [NADPH--hemoprotein reductase] + H2O + H(+). Its pathway is lipid metabolism; arachidonate metabolism. Functionally, a cytochrome P450 monooxygenase that may play a major role in the metabolism of arachidonic acid in the intestinal tract. Exhibits regioselective hydroxylase and epoxidase activity toward arachidonic acid, producing 16(R)-hydroxyeicosatetraenoic acid (HETE) and (14R,15S)-epoxyeicosatrienoic acid (EpETrE) as major products. Mechanistically, uses molecular oxygen inserting one oxygen atom into a substrate, and reducing the second into a water molecule, with two electrons provided by NADPH via cytochrome P450 reductase (CPR; NADPH-ferrihemoprotein reductase). This Mus musculus (Mouse) protein is Cytochrome P450 2C40.